Here is a 1115-residue protein sequence, read N- to C-terminus: Scavenger receptor cysteine-rich type 1 protein M130 (1115 aa).

An N-terminal signal peptide occupies residues 1–46; it reads MDKLRMVLHENSGSADFRRCSAHLSSFTFAVVAVLSACLVTSSLGG. Residues 47 to 1044 are Extracellular-facing; sequence KDKELRLTGG…ESLHATGRSS (998 aa). 9 SRCR domains span residues 51–151, 158–258, 265–365, 372–472, 477–577, 582–682, 718–818, 823–925, and 928–1028; these read LRLT…VTCS, MGLV…VICL, LRVV…VTCS, LRLK…ITCS, PRLV…VVCS, IRLV…VICS, LRLV…VICS, LRLI…ITCA, and IRLQ…VTCS. 23 cysteine pairs are disulfide-bonded: Cys-76-Cys-140, Cys-89-Cys-150, Cys-120-Cys-130, Cys-183-Cys-247, Cys-196-Cys-257, Cys-227-Cys-237, Cys-290-Cys-354, Cys-303-Cys-364, Cys-334-Cys-344, Cys-397-Cys-461, Cys-410-Cys-471, Cys-441-Cys-451, Cys-502-Cys-566, Cys-515-Cys-576, Cys-546-Cys-556, Cys-607-Cys-671, Cys-620-Cys-681, Cys-651-Cys-661, Cys-743-Cys-807, Cys-756-Cys-817, Cys-787-Cys-797, Cys-863-Cys-924, and Cys-894-Cys-904. Asn-105 carries an N-linked (GlcNAc...) asparagine glycan. Asn-139 carries an N-linked (GlcNAc...) asparagine glycan. The N-linked (GlcNAc...) asparagine glycan is linked to Asn-936. Intrachain disulfides connect Cys-953–Cys-1017, Cys-966–Cys-1027, and Cys-997–Cys-1007. The helical transmembrane segment at 1045–1065 threads the bilayer; it reads FVALAIFGVILLACLIAFLIW. Residues 1066-1115 lie on the Cytoplasmic side of the membrane; the sequence is TQKRRQRQRLSVFSGGENSVHQIQYREMNSCLKADETDMLNPSGDHSEVQ. Residues 1090–1093 carry the Internalization signal motif; the sequence is YREM.

In terms of assembly, interacts with CSNK2B. In terms of processing, a soluble form (sCD163) is produced by proteolytic shedding which can be induced by lipopolysaccharide, phorbol ester and Fc region of immunoglobulin gamma. This cleavage is dependent on protein kinase C and tyrosine kinases and can be blocked by protease inhibitors. The shedding is inhibited by the tissue inhibitor of metalloproteinase TIMP3, and thus probably induced by membrane-bound metalloproteinases ADAMs. Post-translationally, phosphorylated. As to expression, expressed in monocytes and macrophages. Detected only in one population of monocytes (CD163+) which is in advanced maturation stage.

The protein resides in the secreted. The protein localises to the cell membrane. In terms of biological role, involved in clearance and endocytosis of hemoglobin/haptoglobin complexes by macrophages and may thereby protect tissues from free hemoglobin-mediated oxidative damage. May play a role in the uptake and recycling of iron, via endocytosis of hemoglobin/haptoglobin and subsequent breakdown of heme. Binds hemoglobin/haptoglobin complexes in a calcium-dependent and pH-dependent manner. Induces a cascade of intracellular signals that involves tyrosine kinase-dependent calcium mobilization, inositol triphosphate production and secretion of IL6 and CSF1. May play a role in the process of infection of porcine monocytes/macrophages by African swine fever virus (ASFV). In case of porcine reproductive and respiratory syndrome virus (PRRSV), serves mediates virion attachment and plays a role in viral entry. Its function is as follows. After shedding, the soluble form (sCD163) may play an anti-inflammatory role. This is Scavenger receptor cysteine-rich type 1 protein M130 (CD163) from Sus scrofa (Pig).